The following is a 184-amino-acid chain: Adenine phosphoribosyltransferase (184 aa).

The protein belongs to the purine/pyrimidine phosphoribosyltransferase family. Homodimer.

It is found in the cytoplasm. The catalysed reaction is AMP + diphosphate = 5-phospho-alpha-D-ribose 1-diphosphate + adenine. The protein operates within purine metabolism; AMP biosynthesis via salvage pathway; AMP from adenine: step 1/1. Its function is as follows. Catalyzes a salvage reaction resulting in the formation of AMP, that is energically less costly than de novo synthesis. In Myxococcus xanthus (strain DK1622), this protein is Adenine phosphoribosyltransferase.